Reading from the N-terminus, the 591-residue chain is NADP-dependent malic enzyme (591 aa).

Residue Y139 is the Proton donor of the active site. R192 serves as a coordination point for NAD(+). The Proton acceptor role is filled by K210. Positions 282, 283, and 306 each coordinate a divalent metal cation. An NAD(+)-binding site is contributed by D306. 335 to 351 (LFLGAGEAGTGIAELIA) contributes to the NADP(+) binding site. An NAD(+)-binding site is contributed by N447.

It belongs to the malic enzymes family. Homotetramer. Mg(2+) serves as cofactor. It depends on Mn(2+) as a cofactor.

The protein resides in the cytoplasm. It carries out the reaction (S)-malate + NADP(+) = pyruvate + CO2 + NADPH. It catalyses the reaction oxaloacetate + H(+) = pyruvate + CO2. In Vitis vinifera (Grape), this protein is NADP-dependent malic enzyme.